The chain runs to 280 residues: Pyridoxal 5'-phosphate synthase subunit PdxS (280 aa).

D-ribose 5-phosphate is bound at residue Asp-12. Residue Lys-69 is the Schiff-base intermediate with D-ribose 5-phosphate of the active site. Gly-141 is a D-ribose 5-phosphate binding site. D-glyceraldehyde 3-phosphate is bound at residue Arg-153. D-ribose 5-phosphate-binding positions include Gly-202 and 223–224 (GS).

Belongs to the PdxS/SNZ family. In the presence of PdxT, forms a dodecamer of heterodimers.

It catalyses the reaction aldehydo-D-ribose 5-phosphate + D-glyceraldehyde 3-phosphate + L-glutamine = pyridoxal 5'-phosphate + L-glutamate + phosphate + 3 H2O + H(+). It functions in the pathway cofactor biosynthesis; pyridoxal 5'-phosphate biosynthesis. Functionally, catalyzes the formation of pyridoxal 5'-phosphate from ribose 5-phosphate (RBP), glyceraldehyde 3-phosphate (G3P) and ammonia. The ammonia is provided by the PdxT subunit. Can also use ribulose 5-phosphate and dihydroxyacetone phosphate as substrates, resulting from enzyme-catalyzed isomerization of RBP and G3P, respectively. This Fusobacterium nucleatum subsp. nucleatum (strain ATCC 25586 / DSM 15643 / BCRC 10681 / CIP 101130 / JCM 8532 / KCTC 2640 / LMG 13131 / VPI 4355) protein is Pyridoxal 5'-phosphate synthase subunit PdxS.